Here is a 69-residue protein sequence, read N- to C-terminus: Sperm protamine P1 (69 aa).

Residues 1–69 (MASYRNSRSR…RKRNNNTENK (69 aa)) are disordered. Basic residues-rich tracts occupy residues 7–25 (SRSR…RSRV) and 34–63 (RSSR…RKRN).

It belongs to the protamine P1 family. As to expression, testis.

Its subcellular location is the nucleus. The protein localises to the chromosome. In terms of biological role, protamines substitute for histones in the chromatin of sperm during the haploid phase of spermatogenesis. They compact sperm DNA into a highly condensed, stable and inactive complex. This is Sperm protamine P1 (PRM1) from Perameles gunnii (Eastern barred bandicoot).